The sequence spans 148 residues: SsrA-binding protein (148 aa).

Belongs to the SmpB family.

Its subcellular location is the cytoplasm. Its function is as follows. Required for rescue of stalled ribosomes mediated by trans-translation. Binds to transfer-messenger RNA (tmRNA), required for stable association of tmRNA with ribosomes. tmRNA and SmpB together mimic tRNA shape, replacing the anticodon stem-loop with SmpB. tmRNA is encoded by the ssrA gene; the 2 termini fold to resemble tRNA(Ala) and it encodes a 'tag peptide', a short internal open reading frame. During trans-translation Ala-aminoacylated tmRNA acts like a tRNA, entering the A-site of stalled ribosomes, displacing the stalled mRNA. The ribosome then switches to translate the ORF on the tmRNA; the nascent peptide is terminated with the 'tag peptide' encoded by the tmRNA and targeted for degradation. The ribosome is freed to recommence translation, which seems to be the essential function of trans-translation. The chain is SsrA-binding protein from Ehrlichia canis (strain Jake).